Consider the following 266-residue polypeptide: Trypsin 5G1 (266 aa).

The N-terminal stretch at 1 to 18 is a signal peptide; it reads MTRIILILTATFFACALG. A propeptide spans 19 to 39 (activation peptide); sequence ASTGGSHPLRPWWNALRSSGR. Positions 40-265 constitute a Peptidase S1 domain; that stretch reads IVGGFEVPVE…VRDWVKEVSG (226 aa). A disulfide bridge links Cys66 with Cys82. Residues His81 and Asp125 each act as charge relay system in the active site. Intrachain disulfides connect Cys190-Cys206 and Cys217-Cys241. Catalysis depends on Ser221, which acts as the Charge relay system.

It belongs to the peptidase S1 family. As to expression, midgut.

It is found in the secreted. It localises to the extracellular space. It catalyses the reaction Preferential cleavage: Arg-|-Xaa, Lys-|-Xaa.. Major function may be to aid in digestion of the blood meal. The sequence is that of Trypsin 5G1 from Aedes aegypti (Yellowfever mosquito).